Reading from the N-terminus, the 333-residue chain is Transmembrane protein I329L (333 aa).

A signal peptide spans 1 to 31 (MLRVFIFFVFLGSGLTGRIKPQITCKYFISE). 6 N-linked (GlcNAc...) asparagine; by host glycosylation sites follow: asparagine 32, asparagine 39, asparagine 44, asparagine 76, asparagine 82, and asparagine 101. The Extracellular portion of the chain corresponds to 32–239 (NNTWYKYNVT…NTERYKSCYP (208 aa)). The stretch at 112 to 133 (ELKFLDLRYNDLQVIEYNILRK) is one LRR repeat. Asparagine 181, asparagine 185, and asparagine 219 each carry an N-linked (GlcNAc...) asparagine; by host glycan. Cysteine 195 and cysteine 237 are oxidised to a cystine. Residues 240–260 (LVFISILCSCISFLFLFICLL) traverse the membrane as a helical segment. Topologically, residues 261-333 (RSICKKYSCT…EKKVSCSRRK (73 aa)) are cytoplasmic.

It belongs to the asfivirus I329L family. Highly glycosylated.

The protein localises to the host endoplasmic reticulum membrane. Its subcellular location is the host Golgi apparatus membrane. Viral TLR3 homolog that probably prevents TLR3 dimerization and subsequent induction of IFN. Inhibits dsRNA-stimulated activation of NF-kB and IRF3. The protein is Transmembrane protein I329L of Ornithodoros (relapsing fever ticks).